Here is a 288-residue protein sequence, read N- to C-terminus: Protoheme IX farnesyltransferase (288 aa).

The next 9 helical transmembrane spans lie at 8–28 (ATKP…FLLA), 35–55 (YLIF…GCVL), 80–100 (ISIL…IYLL), 107–127 (LTML…TKCM), 132–152 (IYST…GYCA), 162–182 (LLLL…IAIL), 208–228 (IVIY…SGYT), 229–249 (TSYQ…YLAL), and 266–286 (FIFS…DSIF).

It belongs to the UbiA prenyltransferase family. Protoheme IX farnesyltransferase subfamily.

It localises to the cell membrane. It carries out the reaction heme b + (2E,6E)-farnesyl diphosphate + H2O = Fe(II)-heme o + diphosphate. Its pathway is porphyrin-containing compound metabolism; heme O biosynthesis; heme O from protoheme: step 1/1. In terms of biological role, converts heme B (protoheme IX) to heme O by substitution of the vinyl group on carbon 2 of heme B porphyrin ring with a hydroxyethyl farnesyl side group. In Baumannia cicadellinicola subsp. Homalodisca coagulata, this protein is Protoheme IX farnesyltransferase.